The chain runs to 146 residues: Putative inactive cytochrome P450 2G1 (146 aa).

Position 91 (C91) interacts with heme.

This sequence belongs to the cytochrome P450 family. The cofactor is heme.

This chain is Putative inactive cytochrome P450 2G1 (CYP2G1P), found in Homo sapiens (Human).